Reading from the N-terminus, the 564-residue chain is Serine/threonine-protein kinase PknA (564 aa).

Positions 9-271 (YRVIKTLGSG…TAREMLEALQ (263 aa)) constitute a Protein kinase domain. Residues 15–23 (LGSGGFGET) and K40 contribute to the ATP site. D139 functions as the Proton acceptor in the catalytic mechanism. Positions 360 to 406 (QPVTQTTSLPSETTISNNDTPTVEPSPTDTPETPISQTVTQDPTPQA) are enriched in polar residues. The segment at 360 to 458 (QPVTQTTSLP…PVEATDRPSP (99 aa)) is disordered. Residues 428-445 (TTEPTTSVPQPTTPSEPQ) show a composition bias toward low complexity.

Belongs to the protein kinase superfamily. Ser/Thr protein kinase family.

It catalyses the reaction L-seryl-[protein] + ATP = O-phospho-L-seryl-[protein] + ADP + H(+). The enzyme catalyses L-threonyl-[protein] + ATP = O-phospho-L-threonyl-[protein] + ADP + H(+). Its function is as follows. Probably required for both normal cellular growth and differentiation. Inactivation of pknA leads to colonies that appear light green and rough in the absence of combined nitrogen. The chain is Serine/threonine-protein kinase PknA (pknA) from Nostoc sp. (strain PCC 7120 / SAG 25.82 / UTEX 2576).